A 314-amino-acid polypeptide reads, in one-letter code: Oxaloacetate tautomerase FAHD2B, mitochondrial (314 aa).

A mitochondrion-targeting transit peptide spans 1–84 (MLVSGRRRLL…ATLSVARRAL (84 aa)). Residues glutamate 159, glutamate 161, and aspartate 190 each contribute to the Mg(2+) site.

Belongs to the FAH family. Requires Mg(2+) as cofactor. The cofactor is Mn(2+).

It localises to the mitochondrion. The enzyme catalyses oxaloacetate = enol-oxaloacetate. Tautomerase that converts enol-oxaloacetate, a strong inhibitor of succinate dehydrogenase, to the physiological keto form of oxaloacetate. It is thereby required to maximize aerobic respiration efficiency by preventing succinate dehydrogenase inhibition. This Homo sapiens (Human) protein is Oxaloacetate tautomerase FAHD2B, mitochondrial.